We begin with the raw amino-acid sequence, 136 residues long: SNARE-associated protein Snapin (136 aa).

At Ala-2 the chain carries N-acetylalanine. Ser-10 is subject to Phosphoserine. Residue Thr-14 is modified to Phosphothreonine. A coiled-coil region spans residues 37 to 126; it reads VQQLDSHVHA…TARRRAMLDS (90 aa). Ser-50 carries the phosphoserine; by PKA modification. The segment at 83-136 is interaction with TOR1A; sequence KKLLNARRRVVLVNNILQNAQERLRRLNHSVAKETARRRAMLDSGIYPPGSPGK. Ser-126 is modified (phosphoserine). At Tyr-129 the chain carries Phosphotyrosine. The residue at position 133 (Ser-133) is a Phosphoserine.

Belongs to the SNAPIN family. Component of the biogenesis of lysosome-related organelles complex 1 (BLOC-1) composed of BLOC1S1, BLOC1S2, BLOC1S3, BLOC1S4, BLOC1S5, BLOC1S6, DTNBP1/BLOC1S7 and SNAPIN/BLOC1S8. Octamer composed of one copy each BLOC1S1, BLOC1S2, BLOC1S3, BLOC1S4, BLOC1S5, BLOC1S6, DTNBP1/BLOC1S7 and SNAPIN/BLOC1S8. The BLOC-1 complex associates with the AP-3 protein complex and membrane protein cargos. Component of the BLOC-one-related complex (BORC) which is composed of BLOC1S1, BLOC1S2, BORCS5, BORCS6, BORCS7, BORCS8, KXD1 and SNAPIN. Associates with the SNARE complex. Interacts with CSNK1D, SNAP23 and STX4A but not with STX1A, VAMP2 and SYT1. Interacts with SNAP25; the interaction with SNAP25 is increased by its phosphorylation. Interacts with CNTRL, NANOS1, PUM2 and RGS7. Interacts with TOR1A; the interaction is direct and associates SNAPIN with the CSN complex. In terms of assembly, (Microbial infection) Interacts with human cytomegalovirus/HHV-5 protein UL70. Phosphorylated by CSNK1D/CK1. Phosphorylated by PKD, phosphorylation controls SNAPIN protein stability. In terms of tissue distribution, expressed in male germ cells of adult testis (at protein level).

It localises to the membrane. The protein localises to the cytoplasm. The protein resides in the cytosol. It is found in the perinuclear region. Its subcellular location is the golgi apparatus membrane. It localises to the lysosome membrane. The protein localises to the cytoplasmic vesicle. The protein resides in the secretory vesicle. It is found in the synaptic vesicle membrane. Its function is as follows. Component of the BLOC-1 complex, a complex that is required for normal biogenesis of lysosome-related organelles (LRO), such as platelet dense granules and melanosomes. In concert with the AP-3 complex, the BLOC-1 complex is required to target membrane protein cargos into vesicles assembled at cell bodies for delivery into neurites and nerve terminals. The BLOC-1 complex, in association with SNARE proteins, is also proposed to be involved in neurite extension. Plays a role in intracellular vesicle trafficking and synaptic vesicle recycling. May modulate a step between vesicle priming, fusion and calcium-dependent neurotransmitter release through its ability to potentiate the interaction of synaptotagmin with the SNAREs and the plasma-membrane-associated protein SNAP25. Its phosphorylation state influences exocytotic protein interactions and may regulate synaptic vesicle exocytosis. May also have a role in the mechanisms of SNARE-mediated membrane fusion in non-neuronal cells. As part of the BORC complex may play a role in lysosomes movement and localization at the cell periphery. Associated with the cytosolic face of lysosomes, the BORC complex may recruit ARL8B and couple lysosomes to microtubule plus-end-directed kinesin motor. This chain is SNARE-associated protein Snapin (SNAPIN), found in Homo sapiens (Human).